The sequence spans 272 residues: 5'-nucleotidase SurE (272 aa).

A divalent metal cation contacts are provided by aspartate 28, aspartate 29, serine 59, and asparagine 115.

The protein belongs to the SurE nucleotidase family. The cofactor is a divalent metal cation.

The protein localises to the cytoplasm. It catalyses the reaction a ribonucleoside 5'-phosphate + H2O = a ribonucleoside + phosphate. Functionally, nucleotidase that shows phosphatase activity on nucleoside 5'-monophosphates. In Chlorobium chlorochromatii (strain CaD3), this protein is 5'-nucleotidase SurE.